We begin with the raw amino-acid sequence, 734 residues long: DNA-binding protein RFX2 (734 aa).

The segment covering 1-23 (MQRSEGGSETPSTVALRTSTSAQ) has biased composition (polar residues). The disordered stretch occupies residues 1–31 (MQRSEGGSETPSTVALRTSTSAQAPVVQPVP). The RFX-type winged-helix DNA-binding region spans 204-279 (HLQWLLDNYE…YHYYGIRLKP (76 aa)). The segment at 694 to 722 (DTSFSDDMTSDGDMSRMSERSLTEPAVKR) is disordered. Residues 706-722 (DMSRMSERSLTEPAVKR) show a composition bias toward basic and acidic residues.

The protein belongs to the RFX family. As to quaternary structure, homodimer. Heterodimer; heterodimerizes with other rfx proteins.

It localises to the nucleus. It is found in the cytoplasm. In terms of biological role, transcription factor that acts as a key regulator of ciliogenesis. Specifically regulates expression of genes required for cilium assembly and function. Recognizes and binds the X-box, a regulatory motif with DNA sequence 5'-GTNRCC(0-3N)RGYAAC-3' present on promoters. The protein is DNA-binding protein RFX2 (rfx2) of Danio rerio (Zebrafish).